The sequence spans 907 residues: Envelope glycoprotein B (907 aa).

Positions 1-24 (MESRIWCLVVCVNLCIVCLGAAVS) are cleaved as a signal peptide. The Virion surface segment spans residues 25–751 (SSSTRGTSAT…EGVATFLKNP (727 aa)). The disordered stretch occupies residues 29–62 (RGTSATHSHHSSHTTSAAHSRSGSVSQRVTSSQT). Residues 41 to 62 (HTTSAAHSRSGSVSQRVTSSQT) are compositionally biased toward low complexity. N-linked (GlcNAc...) asparagine; by host glycosylation is found at asparagine 68, asparagine 73, and asparagine 85. Intrachain disulfides connect cysteine 94/cysteine 551, cysteine 111/cysteine 507, cysteine 185/cysteine 250, and cysteine 344/cysteine 391. The segment at 152–158 (SYAYIHT) is involved in fusion and/or binding to host membrane. N-linked (GlcNAc...) asparagine; by host glycosylation is present at asparagine 208. The segment at 237–244 (GSTWLYRE) is involved in fusion and/or binding to host membrane. N-linked (GlcNAc...) asparagine; by host glycosylation is found at asparagine 281, asparagine 286, asparagine 302, asparagine 341, asparagine 383, asparagine 405, asparagine 409, asparagine 417, asparagine 447, asparagine 452, asparagine 456, asparagine 466, asparagine 555, and asparagine 586. A disulfide bridge links cysteine 574 with cysteine 611. The tract at residues 697-749 (VEDKVVDPLPPYLKGLDDLMSGLGAAGKAVGVAIGAVGGAVASVVEGVATFLK) is hydrophobic membrane proximal region. Residues 752 to 772 (FGAFTIILVAIAVVIITYLIY) form a helical membrane-spanning segment. Over 773-907 (TRQRRLCTQP…LKDSDEEENV (135 aa)) the chain is Intravirion. Polar residues-rich tracts occupy residues 798–810 (VTSGSTKDTSLQA) and 860–877 (RAQQNGTDSLDGRTGTQD). Disordered stretches follow at residues 798 to 838 (VTSG…TAAP) and 857 to 907 (AEQR…EENV). Residues 878 to 887 (KGQKPNLLDR) show a composition bias toward basic and acidic residues. The Internalization motif motif lies at 895–898 (YRHL).

It belongs to the herpesviridae glycoprotein B family. As to quaternary structure, homotrimer; disulfide-linked. Binds to heparan sulfate proteoglycans. Interacts with gH/gL heterodimer. In terms of processing, a proteolytic cleavage by host furin generates two subunits that remain linked by disulfide bonds.

Its subcellular location is the virion membrane. The protein localises to the host cell membrane. It localises to the host endosome membrane. It is found in the host Golgi apparatus membrane. Its function is as follows. Envelope glycoprotein that forms spikes at the surface of virion envelope. Essential for the initial attachment to heparan sulfate moieties of the host cell surface proteoglycans. Involved in fusion of viral and cellular membranes leading to virus entry into the host cell. Following initial binding to its host receptors, membrane fusion is mediated by the fusion machinery composed at least of gB and the heterodimer gH/gL. May be involved in the fusion between the virion envelope and the outer nuclear membrane during virion egress. In Human cytomegalovirus (strain Merlin) (HHV-5), this protein is Envelope glycoprotein B.